The sequence spans 131 residues: Small ribosomal subunit protein uS8 (131 aa).

This sequence belongs to the universal ribosomal protein uS8 family. In terms of assembly, part of the 30S ribosomal subunit. Contacts proteins S5 and S12.

In terms of biological role, one of the primary rRNA binding proteins, it binds directly to 16S rRNA central domain where it helps coordinate assembly of the platform of the 30S subunit. The polypeptide is Small ribosomal subunit protein uS8 (Cupriavidus necator (strain ATCC 17699 / DSM 428 / KCTC 22496 / NCIMB 10442 / H16 / Stanier 337) (Ralstonia eutropha)).